The following is a 142-amino-acid chain: MVLSAADKTNVKGVFSKISGHAEEYGAETLERMFTAYPQTKTYFPHFDLQHGSAQIKAHGKKVVAALVEAVNHIDDIAGALSKLSDLHAQKLRVDPVNFKFLGHCFLVVVAIHHPSALTAEVHASLDKFLCAVGTVLTAKYR.

One can recognise a Globin domain in the interval 2–142 (VLSAADKTNV…VGTVLTAKYR (141 aa)). H59 provides a ligand contact to O2. H88 contacts heme b.

The protein belongs to the globin family. In terms of assembly, heterotetramer of two alpha chains and two beta chains. Red blood cells.

Functionally, involved in oxygen transport from the lung to the various peripheral tissues. This is Hemoglobin subunit alpha-A (HBAA) from Anser indicus (Bar-headed goose).